Here is a 235-residue protein sequence, read N- to C-terminus: Octanoyltransferase (235 aa).

One can recognise a BPL/LPL catalytic domain in the interval 30 to 214 (NELEDTLLLL…YFGKVFGAKF (185 aa)). Substrate-binding positions include 75-82 (RGGDVTYH), 144-146 (AIG), and 157-159 (GFA). The Acyl-thioester intermediate role is filled by C175.

The protein belongs to the LipB family.

The protein localises to the cytoplasm. It catalyses the reaction octanoyl-[ACP] + L-lysyl-[protein] = N(6)-octanoyl-L-lysyl-[protein] + holo-[ACP] + H(+). The protein operates within protein modification; protein lipoylation via endogenous pathway; protein N(6)-(lipoyl)lysine from octanoyl-[acyl-carrier-protein]: step 1/2. Its function is as follows. Catalyzes the transfer of endogenously produced octanoic acid from octanoyl-acyl-carrier-protein onto the lipoyl domains of lipoate-dependent enzymes. Lipoyl-ACP can also act as a substrate although octanoyl-ACP is likely to be the physiological substrate. The chain is Octanoyltransferase from Caldicellulosiruptor saccharolyticus (strain ATCC 43494 / DSM 8903 / Tp8T 6331).